The sequence spans 136 residues: Ribosome-binding factor A (136 aa).

This sequence belongs to the RbfA family. In terms of assembly, monomer. Binds 30S ribosomal subunits, but not 50S ribosomal subunits or 70S ribosomes.

The protein resides in the cytoplasm. Its function is as follows. One of several proteins that assist in the late maturation steps of the functional core of the 30S ribosomal subunit. Associates with free 30S ribosomal subunits (but not with 30S subunits that are part of 70S ribosomes or polysomes). Required for efficient processing of 16S rRNA. May interact with the 5'-terminal helix region of 16S rRNA. This chain is Ribosome-binding factor A, found in Yersinia enterocolitica serotype O:8 / biotype 1B (strain NCTC 13174 / 8081).